Consider the following 522-residue polypeptide: Glucans biosynthesis protein G (522 aa).

An N-terminal signal peptide occupies residues 1–33; that stretch reads MLVNILSKKPRAASVRWLGATVLFTLLTSPAWA.

It belongs to the OpgD/OpgG family.

It localises to the periplasm. Its pathway is glycan metabolism; osmoregulated periplasmic glucan (OPG) biosynthesis. Its function is as follows. Involved in the biosynthesis of osmoregulated periplasmic glucans (OPGs). This Serratia proteamaculans (strain 568) protein is Glucans biosynthesis protein G.